The sequence spans 321 residues: DNA-directed RNA polymerase subunit alpha (321 aa).

The alpha N-terminal domain (alpha-NTD) stretch occupies residues 1–235; that stretch reads MAYQIECLET…DLFSPLKEVP (235 aa). Residues 252–321 form an alpha C-terminal domain (alpha-CTD) region; it reads QIPIEQLNLS…TLPPQKAARN (70 aa).

It belongs to the RNA polymerase alpha chain family. Homodimer. In cyanobacteria the RNAP catalytic core is composed of 2 alpha, 1 beta, 1 beta', 1 gamma and 1 omega subunit. When a sigma factor is associated with the core the holoenzyme is formed, which can initiate transcription.

It catalyses the reaction RNA(n) + a ribonucleoside 5'-triphosphate = RNA(n+1) + diphosphate. Its function is as follows. DNA-dependent RNA polymerase catalyzes the transcription of DNA into RNA using the four ribonucleoside triphosphates as substrates. The protein is DNA-directed RNA polymerase subunit alpha of Thermosynechococcus vestitus (strain NIES-2133 / IAM M-273 / BP-1).